A 251-amino-acid chain; its full sequence is Cytochrome c oxidase subunit 2 (251 aa).

Positions 1–15 (MLNLLYNQIFNVILN) are cleaved as a signal peptide. At 16–41 (DVPTPYNTYFQDSATPNQEGILELHD) the chain is on the mitochondrial intermembrane side. A helical membrane pass occupies residues 42-62 (NIMFYLLVILGLVSWLLFTIT). At 63 to 82 (RTYSKNPIAYKYIKHGQTIE) the chain is on the mitochondrial matrix side. The helical transmembrane segment at 83 to 103 (IIWTIFPAVILLIIAFPSFIL) threads the bilayer. Residues 104 to 251 (LYLCDEVISP…PAFLEWLNEQ (148 aa)) are Mitochondrial intermembrane-facing. Cu cation contacts are provided by H186, C221, E223, C225, H229, and M232. Mg(2+) is bound at residue E223.

The protein belongs to the cytochrome c oxidase subunit 2 family. In terms of assembly, component of the cytochrome c oxidase (complex IV, CIV), a multisubunit enzyme composed of a catalytic core of 3 subunits and several supernumerary subunits. The complex exists as a monomer or a dimer and forms supercomplexes (SCs) in the inner mitochondrial membrane with ubiquinol-cytochrome c oxidoreductase (cytochrome b-c1 complex, complex III, CIII). The cofactor is Cu cation. The signal sequence of COX2 is processed by IMP1.

It is found in the mitochondrion inner membrane. It carries out the reaction 4 Fe(II)-[cytochrome c] + O2 + 8 H(+)(in) = 4 Fe(III)-[cytochrome c] + 2 H2O + 4 H(+)(out). Its function is as follows. Component of the cytochrome c oxidase, the last enzyme in the mitochondrial electron transport chain which drives oxidative phosphorylation. The respiratory chain contains 3 multisubunit complexes succinate dehydrogenase (complex II, CII), ubiquinol-cytochrome c oxidoreductase (cytochrome b-c1 complex, complex III, CIII) and cytochrome c oxidase (complex IV, CIV), that cooperate to transfer electrons derived from NADH and succinate to molecular oxygen, creating an electrochemical gradient over the inner membrane that drives transmembrane transport and the ATP synthase. Cytochrome c oxidase is the component of the respiratory chain that catalyzes the reduction of oxygen to water. Electrons originating from reduced cytochrome c in the intermembrane space (IMS) are transferred via the dinuclear copper A center (CU(A)) of subunit 2 and heme A of subunit 1 to the active site in subunit 1, a binuclear center (BNC) formed by heme A3 and copper B (CU(B)). The BNC reduces molecular oxygen to 2 water molecules using 4 electrons from cytochrome c in the IMS and 4 protons from the mitochondrial matrix. This chain is Cytochrome c oxidase subunit 2 (COX2), found in Lachancea thermotolerans (strain ATCC 56472 / CBS 6340 / NRRL Y-8284) (Yeast).